The sequence spans 410 residues: Putative ankyrin repeat protein FPV240 (410 aa).

ANK repeat units lie at residues N33–Y62, D66–D95, K100–V129, D133–I162, Y166–Y195, and P200–I229.

The sequence is that of Putative ankyrin repeat protein FPV240 from Vertebrata (FPV).